The following is a 120-amino-acid chain: MERIMFRAKIHRATVTQADLDYVGSVTIDQDLLDAADILVNEKVDIWNITNGNRLHTYALSGPRGSGVIGINGAAAHLMRPGDMVIIAAFGNFSEEEARTLEPKVVLVDAKNRLLELQPV.

Ser-25 functions as the Schiff-base intermediate with substrate; via pyruvic acid in the catalytic mechanism. Ser-25 carries the pyruvic acid (Ser) modification. Thr-57 contacts substrate. The active-site Proton donor is the Tyr-58. 73–75 (GAA) is a binding site for substrate.

The protein belongs to the PanD family. In terms of assembly, heterooctamer of four alpha and four beta subunits. The cofactor is pyruvate. Is synthesized initially as an inactive proenzyme, which is activated by self-cleavage at a specific serine bond to produce a beta-subunit with a hydroxyl group at its C-terminus and an alpha-subunit with a pyruvoyl group at its N-terminus.

It localises to the cytoplasm. The catalysed reaction is L-aspartate + H(+) = beta-alanine + CO2. It functions in the pathway cofactor biosynthesis; (R)-pantothenate biosynthesis; beta-alanine from L-aspartate: step 1/1. Catalyzes the pyruvoyl-dependent decarboxylation of aspartate to produce beta-alanine. The sequence is that of Aspartate 1-decarboxylase from Deinococcus radiodurans (strain ATCC 13939 / DSM 20539 / JCM 16871 / CCUG 27074 / LMG 4051 / NBRC 15346 / NCIMB 9279 / VKM B-1422 / R1).